Consider the following 559-residue polypeptide: Formate--tetrahydrofolate ligase (559 aa).

Residue 67–74 (TPAGEGKS) coordinates ATP.

It belongs to the formate--tetrahydrofolate ligase family.

It catalyses the reaction (6S)-5,6,7,8-tetrahydrofolate + formate + ATP = (6R)-10-formyltetrahydrofolate + ADP + phosphate. Its pathway is one-carbon metabolism; tetrahydrofolate interconversion. The polypeptide is Formate--tetrahydrofolate ligase (Lactobacillus delbrueckii subsp. bulgaricus (strain ATCC BAA-365 / Lb-18)).